The chain runs to 297 residues: Release factor glutamine methyltransferase (297 aa).

S-adenosyl-L-methionine is bound by residues 134–138 (GTGSG), D157, and N200. Position 200-203 (200-203 (NPPY)) interacts with substrate.

It belongs to the protein N5-glutamine methyltransferase family. PrmC subfamily.

The catalysed reaction is L-glutaminyl-[peptide chain release factor] + S-adenosyl-L-methionine = N(5)-methyl-L-glutaminyl-[peptide chain release factor] + S-adenosyl-L-homocysteine + H(+). In terms of biological role, methylates the class 1 translation termination release factors RF1/PrfA and RF2/PrfB on the glutamine residue of the universally conserved GGQ motif. In Bradyrhizobium diazoefficiens (strain JCM 10833 / BCRC 13528 / IAM 13628 / NBRC 14792 / USDA 110), this protein is Release factor glutamine methyltransferase.